A 668-amino-acid chain; its full sequence is DNA ligase (668 aa).

Residues 31–35, 80–81, and glutamate 112 contribute to the NAD(+) site; these read DAEYD and SL. Lysine 114 functions as the N6-AMP-lysine intermediate in the catalytic mechanism. Arginine 135, glutamate 172, lysine 289, and lysine 313 together coordinate NAD(+). Zn(2+) contacts are provided by cysteine 407, cysteine 410, cysteine 425, and cysteine 431. The region spanning 591–668 is the BRCT domain; sequence SVPQPLAGKV…NEEQLIELLN (78 aa).

The protein belongs to the NAD-dependent DNA ligase family. LigA subfamily. Mg(2+) is required as a cofactor. Mn(2+) serves as cofactor.

The enzyme catalyses NAD(+) + (deoxyribonucleotide)n-3'-hydroxyl + 5'-phospho-(deoxyribonucleotide)m = (deoxyribonucleotide)n+m + AMP + beta-nicotinamide D-nucleotide.. Its function is as follows. DNA ligase that catalyzes the formation of phosphodiester linkages between 5'-phosphoryl and 3'-hydroxyl groups in double-stranded DNA using NAD as a coenzyme and as the energy source for the reaction. It is essential for DNA replication and repair of damaged DNA. The protein is DNA ligase of Aliivibrio fischeri (strain MJ11) (Vibrio fischeri).